A 376-amino-acid polypeptide reads, in one-letter code: Chaperone protein DnaJ (376 aa).

Residues 5 to 69 (DYYEVLGISK…QKRAQYDQYG (65 aa)) form the J domain. The segment at 133–215 (GKDAEIEIPR…CHGKGRVTKT (83 aa)) adopts a CR-type zinc-finger fold. Zn(2+)-binding residues include C146, C149, C163, C166, C189, C192, C203, and C206. 4 CXXCXGXG motif repeats span residues 146 to 153 (CDTCHGSG), 163 to 170 (CSHCGGKG), 189 to 196 (CQYCNGTG), and 203 to 210 (CSTCHGKG).

Belongs to the DnaJ family. Homodimer. Requires Zn(2+) as cofactor.

The protein localises to the cytoplasm. Participates actively in the response to hyperosmotic and heat shock by preventing the aggregation of stress-denatured proteins and by disaggregating proteins, also in an autonomous, DnaK-independent fashion. Unfolded proteins bind initially to DnaJ; upon interaction with the DnaJ-bound protein, DnaK hydrolyzes its bound ATP, resulting in the formation of a stable complex. GrpE releases ADP from DnaK; ATP binding to DnaK triggers the release of the substrate protein, thus completing the reaction cycle. Several rounds of ATP-dependent interactions between DnaJ, DnaK and GrpE are required for fully efficient folding. Also involved, together with DnaK and GrpE, in the DNA replication of plasmids through activation of initiation proteins. The chain is Chaperone protein DnaJ from Listeria welshimeri serovar 6b (strain ATCC 35897 / DSM 20650 / CCUG 15529 / CIP 8149 / NCTC 11857 / SLCC 5334 / V8).